Consider the following 654-residue polypeptide: Integrator complex subunit 9 (654 aa).

Met1, Arg2, Thr18, Phe19, Arg504, Lys508, and Arg509 together coordinate 1D-myo-inositol hexakisphosphate.

The protein belongs to the metallo-beta-lactamase superfamily. RNA-metabolizing metallo-beta-lactamase-like family. INTS9 subfamily. As to quaternary structure, belongs to the multiprotein complex Integrator, at least composed of IntS1, IntS2, IntS3, IntS4, omd/IntS5, IntS6, defl/IntS7, IntS8, IntS9, IntS10, IntS11, IntS12, asun/IntS13, IntS14 and IntS15. The core complex associates with protein phosphatase 2A subunits mts/PP2A and Pp2A-29B, to form the Integrator-PP2A (INTAC) complex. Within the complex, interacts with IntS1 and IntS12. IntS9 is part of the RNA endonuclease subcomplex, composed of IntS4, IntS9, IntS11 and inositol hexakisphosphate (InsP6).

It is found in the nucleus. The protein resides in the cytoplasm. Its subcellular location is the cytosol. Its function is as follows. Component of the integrator complex, a multiprotein complex that terminates RNA polymerase II (Pol II) transcription in the promoter-proximal region of genes. The integrator complex provides a quality checkpoint during transcription elongation by driving premature transcription termination of transcripts that are unfavorably configured for transcriptional elongation: the complex terminates transcription by (1) catalyzing dephosphorylation of the C-terminal domain (CTD) of Pol II subunit Polr2A/Rbp1 and Spt5, and (2) degrading the exiting nascent RNA transcript via endonuclease activity. The integrator complex is also involved in the 3'-end processing of the U7 snRNA, and also the spliceosomal snRNAs U1, U2, U4 and U5. In Drosophila melanogaster (Fruit fly), this protein is Integrator complex subunit 9.